The primary structure comprises 633 residues: Glutamyl-tRNA(Gln) amidotransferase subunit E (633 aa).

A disordered region spans residues 415-437 (LDDGTTKFLRPQPGSARMYPETD).

This sequence belongs to the GatB/GatE family. GatE subfamily. In terms of assembly, heterodimer of GatD and GatE.

It carries out the reaction L-glutamyl-tRNA(Gln) + L-glutamine + ATP + H2O = L-glutaminyl-tRNA(Gln) + L-glutamate + ADP + phosphate + H(+). In terms of biological role, allows the formation of correctly charged Gln-tRNA(Gln) through the transamidation of misacylated Glu-tRNA(Gln) in organisms which lack glutaminyl-tRNA synthetase. The reaction takes place in the presence of glutamine and ATP through an activated gamma-phospho-Glu-tRNA(Gln). The GatDE system is specific for glutamate and does not act on aspartate. The protein is Glutamyl-tRNA(Gln) amidotransferase subunit E of Saccharolobus solfataricus (strain ATCC 35092 / DSM 1617 / JCM 11322 / P2) (Sulfolobus solfataricus).